The primary structure comprises 267 residues: Indole-3-glycerol phosphate synthase (267 aa).

Belongs to the TrpC family.

The enzyme catalyses 1-(2-carboxyphenylamino)-1-deoxy-D-ribulose 5-phosphate + H(+) = (1S,2R)-1-C-(indol-3-yl)glycerol 3-phosphate + CO2 + H2O. It functions in the pathway amino-acid biosynthesis; L-tryptophan biosynthesis; L-tryptophan from chorismate: step 4/5. This Dichelobacter nodosus (strain VCS1703A) protein is Indole-3-glycerol phosphate synthase.